The sequence spans 846 residues: DNA mismatch repair protein MutS (846 aa).

610–617 serves as a coordination point for ATP; it reads GPNMGGKS.

Belongs to the DNA mismatch repair MutS family.

Functionally, this protein is involved in the repair of mismatches in DNA. It is possible that it carries out the mismatch recognition step. This protein has a weak ATPase activity. This Legionella pneumophila (strain Paris) protein is DNA mismatch repair protein MutS.